The chain runs to 166 residues: Large ribosomal subunit protein uL10 (166 aa).

Belongs to the universal ribosomal protein uL10 family. In terms of assembly, part of the ribosomal stalk of the 50S ribosomal subunit. The N-terminus interacts with L11 and the large rRNA to form the base of the stalk. The C-terminus forms an elongated spine to which L12 dimers bind in a sequential fashion forming a multimeric L10(L12)X complex.

Forms part of the ribosomal stalk, playing a central role in the interaction of the ribosome with GTP-bound translation factors. This Pseudomonas paraeruginosa (strain DSM 24068 / PA7) (Pseudomonas aeruginosa (strain PA7)) protein is Large ribosomal subunit protein uL10.